A 415-amino-acid chain; its full sequence is Plasminogen activator inhibitor 2, macrophage (415 aa).

Asn23, Asn75, Asn261, and Asn339 each carry an N-linked (GlcNAc...) asparagine glycan.

This sequence belongs to the serpin family. Ov-serpin subfamily. As to quaternary structure, interacts with PSMB1. The signal sequence is not cleaved.

It is found in the cytoplasm. The protein localises to the secreted. Its subcellular location is the extracellular space. Functionally, inhibits urokinase-type plasminogen activator. The monocyte derived PAI-2 is distinct from the endothelial cell-derived PAI-1. Not required for normal murine development or survival. The polypeptide is Plasminogen activator inhibitor 2, macrophage (Serpinb2) (Mus musculus (Mouse)).